A 148-amino-acid polypeptide reads, in one-letter code: Transthyretin-like protein 2 (148 aa).

Positions 1 to 17 (MSKYAILGLVLVGTVAS) are cleaved as a signal peptide. Residue Asn-77 is glycosylated (N-linked (GlcNAc...) asparagine).

This sequence belongs to the nematode transthyretin-like family.

The protein resides in the secreted. The chain is Transthyretin-like protein 2 (ttr-2) from Caenorhabditis elegans.